The chain runs to 1177 residues: Topoisomerase 1-associated factor 1 (1177 aa).

Disordered regions lie at residues 575 to 597, 791 to 815, 874 to 1001, and 1021 to 1177; these read AKQAKQADIEGDDEEQASEEEDL, REAWESQEQHSEGQKAPNPMIPVKS, LTEP…ADQE, and LLHG…SDSE. A compositionally biased stretch (acidic residues) spans 583 to 597; the sequence is IEGDDEEQASEEEDL. A compositionally biased stretch (basic and acidic residues) spans 791–803; it reads REAWESQEQHSEG. Composition is skewed to acidic residues over residues 911–921 and 954–963; these read FGSDSEGDDNV and EEEEPDEEDL. A compositionally biased stretch (basic and acidic residues) spans 981–991; it reads IKSDLYIHASD. The span at 1086 to 1096 shows a compositional bias: polar residues; it reads SLGQGSPSLQG. 2 stretches are compositionally biased toward acidic residues: residues 1108-1118 and 1146-1155; these read EENELDFDDDL and TIDEDDDDEA.

The protein belongs to the timeless family. Component of the fork protection complex (FPC) consisting of tof1 and csm3.

The protein localises to the nucleus. Functionally, forms a fork protection complex (FPC) with csm3 and which is required for chromosome segregation during meiosis and DNA damage repair. FPC coordinates leading and lagging strand synthesis and moves with the replication fork. FPC stabilizes replication forks in a configuration that is recognized by replication checkpoint sensors. The protein is Topoisomerase 1-associated factor 1 (tof1) of Neosartorya fischeri (strain ATCC 1020 / DSM 3700 / CBS 544.65 / FGSC A1164 / JCM 1740 / NRRL 181 / WB 181) (Aspergillus fischerianus).